Reading from the N-terminus, the 300-residue chain is Cation-efflux pump FieF (300 aa).

A run of 4 helical transmembrane segments spans residues 12–32 (AALA…VAWY), 40–60 (LAAL…LLVV), 82–102 (AALA…LTGF), and 114–134 (PGVG…LVTY). Asp45 and Asp49 together coordinate Zn(2+). 2 residues coordinate Zn(2+): His153 and Asp157. 2 helical membrane passes run 155–175 (QSDV…WYGF) and 178–198 (ADAL…LRMG).

Belongs to the cation diffusion facilitator (CDF) transporter (TC 2.A.4) family. FieF subfamily. As to quaternary structure, homodimer.

The protein resides in the cell inner membrane. It carries out the reaction Zn(2+)(in) + H(+)(out) = Zn(2+)(out) + H(+)(in). The catalysed reaction is Cd(2+)(in) + H(+)(out) = Cd(2+)(out) + H(+)(in). It catalyses the reaction Fe(2+)(in) + H(+)(out) = Fe(2+)(out) + H(+)(in). In terms of biological role, divalent metal cation transporter which exports Zn(2+), Cd(2+) and possibly Fe(2+). May be involved in zinc and iron detoxification by efflux. In Serratia proteamaculans (strain 568), this protein is Cation-efflux pump FieF.